We begin with the raw amino-acid sequence, 262 residues long: 3-methyl-2-oxobutanoate hydroxymethyltransferase (262 aa).

2 residues coordinate Mg(2+): Asp43 and Asp82. Residues 43–44 (DS), Asp82, and Lys111 contribute to the 3-methyl-2-oxobutanoate site. Glu113 contributes to the Mg(2+) binding site. Glu180 (proton acceptor) is an active-site residue.

This sequence belongs to the PanB family. In terms of assembly, homodecamer; pentamer of dimers. Mg(2+) is required as a cofactor.

It is found in the cytoplasm. It carries out the reaction 3-methyl-2-oxobutanoate + (6R)-5,10-methylene-5,6,7,8-tetrahydrofolate + H2O = 2-dehydropantoate + (6S)-5,6,7,8-tetrahydrofolate. Its pathway is cofactor biosynthesis; (R)-pantothenate biosynthesis; (R)-pantoate from 3-methyl-2-oxobutanoate: step 1/2. Catalyzes the reversible reaction in which hydroxymethyl group from 5,10-methylenetetrahydrofolate is transferred onto alpha-ketoisovalerate to form ketopantoate. The chain is 3-methyl-2-oxobutanoate hydroxymethyltransferase from Wolinella succinogenes (strain ATCC 29543 / DSM 1740 / CCUG 13145 / JCM 31913 / LMG 7466 / NCTC 11488 / FDC 602W) (Vibrio succinogenes).